The following is a 292-amino-acid chain: Probable endonuclease 4 (292 aa).

His-71, His-111, Glu-148, Asp-182, His-185, His-217, Asp-230, His-232, and Glu-262 together coordinate Zn(2+).

It belongs to the AP endonuclease 2 family. Zn(2+) is required as a cofactor.

It catalyses the reaction Endonucleolytic cleavage to 5'-phosphooligonucleotide end-products.. In terms of biological role, endonuclease IV plays a role in DNA repair. It cleaves phosphodiester bonds at apurinic or apyrimidinic (AP) sites, generating a 3'-hydroxyl group and a 5'-terminal sugar phosphate. In Aster yellows witches'-broom phytoplasma (strain AYWB), this protein is Probable endonuclease 4.